The following is a 213-amino-acid chain: EEF1A lysine methyltransferase 1 (213 aa).

This sequence belongs to the class I-like SAM-binding methyltransferase superfamily. EFM5 family.

The protein localises to the cytoplasm. It catalyses the reaction L-lysyl-[protein] + 3 S-adenosyl-L-methionine = N(6),N(6),N(6)-trimethyl-L-lysyl-[protein] + 3 S-adenosyl-L-homocysteine + 3 H(+). Protein-lysine methyltransferase that selectively catalyzes the trimethylation of EEF1A at 'Lys-79'. This is EEF1A lysine methyltransferase 1 from Gallus gallus (Chicken).